The sequence spans 41 residues: Photosystem II reaction center protein X (41 aa).

Topologically, residues 2–6 (TITPS) are lumenal. The chain crosses the membrane as a helical span at residues 7-29 (LKGFFIGLLSGAVVLGLTFAVLI). The Cytoplasmic segment spans residues 30–41 (AISQIDKVQRSL).

Belongs to the PsbX family. Type 1 subfamily. As to quaternary structure, PSII is composed of 1 copy each of membrane proteins PsbA, PsbB, PsbC, PsbD, PsbE, PsbF, PsbH, PsbI, PsbJ, PsbK, PsbL, PsbM, PsbT, PsbX, PsbY, PsbZ, Psb30/Ycf12, peripheral proteins PsbO, CyanoQ (PsbQ), PsbU, PsbV and a large number of cofactors. It forms dimeric complexes. Part of a photosystem II (PSII) assembly intermediate complex PSII-I; crystallized from a strain deleted of psbJ, it forms monomeric PSII before addition of the oxygen evolving complex. PSII-I includes 3 assembly factors not found in mature PSII (Psb27, Psb28 and Psb34). Requires PSII binds multiple chlorophylls, carotenoids and specific lipids. as cofactor.

It localises to the cellular thylakoid membrane. Its function is as follows. Involved in the binding and/or turnover of quinones at the Q(B) site of photosystem II (PSII). PSII is a light-driven water plastoquinone oxidoreductase, using light energy to abstract electrons from H(2)O, generating a proton gradient subsequently used for ATP formation. The polypeptide is Photosystem II reaction center protein X (Thermosynechococcus vestitus (strain NIES-2133 / IAM M-273 / BP-1)).